Reading from the N-terminus, the 521-residue chain is MIRISIGVNRRLRYQFSSFAGYSGSENPRLFKTLGAANTPIPHRRNPEPKGQDLDFVNVAHSHLIQSDWDKLNKLSDHLDSFRVKNVLLKIQKDYLLSLEFFNWAKTRNPGSHSLETHAIVLHTLTKNRKFKSAESILRDVLVNGGVDLPAKVFDALLYSYRECDSTPRVFDSLFKTFAHLKKFRNATDTFMQMKDYGFLPTVESCNAYMSSLLGQGRVDIALRFYREMRRCKISPNPYTLNMVMSGYCRSGKLDKGIELLQDMERLGFRATDVSYNTLIAGHCEKGLLSSALKLKNMMGKSGLQPNVVTFNTLIHGFCRAMKLQEASKVFGEMKAVNVAPNTVTYNTLINGYSQQGDHEMAFRFYEDMVCNGIQRDILTYNALIFGLCKQAKTRKAAQFVKELDKENLVPNSSTFSALIMGQCVRKNADRGFELYKSMIRSGCHPNEQTFNMLVSAFCRNEDFDGASQVLREMVRRSIPLDSRTVHQVCNGLKHQGKDQLVKKLLQEMEGKKFLQESFNN.

The N-terminal 38 residues, 1-38, are a transit peptide targeting the mitochondrion; that stretch reads MIRISIGVNRRLRYQFSSFAGYSGSENPRLFKTLGAAN. PPR repeat units lie at residues 167–201, 202–236, 237–271, 272–306, 307–341, 342–376, 377–411, 412–446, 447–481, and 482–516; these read TPRV…GFLP, TVES…KISP, NPYT…GFRA, TDVS…GLQP, NVVT…NVAP, NTVT…GIQR, DILT…NLVP, NSST…GCHP, NEQT…SIPL, and DSRT…KFLQ.

It belongs to the PPR family. P subfamily.

The protein localises to the mitochondrion. This is Pentatricopeptide repeat-containing protein At4g26680, mitochondrial from Arabidopsis thaliana (Mouse-ear cress).